The sequence spans 509 residues: ATP synthase subunit alpha (509 aa).

169–176 (GDRQTGKT) provides a ligand contact to ATP.

Belongs to the ATPase alpha/beta chains family. F-type ATPases have 2 components, CF(1) - the catalytic core - and CF(0) - the membrane proton channel. CF(1) has five subunits: alpha(3), beta(3), gamma(1), delta(1), epsilon(1). CF(0) has three main subunits: a(1), b(2) and c(9-12). The alpha and beta chains form an alternating ring which encloses part of the gamma chain. CF(1) is attached to CF(0) by a central stalk formed by the gamma and epsilon chains, while a peripheral stalk is formed by the delta and b chains.

Its subcellular location is the cell inner membrane. The enzyme catalyses ATP + H2O + 4 H(+)(in) = ADP + phosphate + 5 H(+)(out). Its function is as follows. Produces ATP from ADP in the presence of a proton gradient across the membrane. The alpha chain is a regulatory subunit. The chain is ATP synthase subunit alpha from Brucella suis biovar 1 (strain 1330).